Consider the following 379-residue polypeptide: Sialidase-2 (379 aa).

Positions 20–23 (YRIP) match the FRIP motif motif. Substrate contacts are provided by R21 and R41. Residue D46 is the Proton acceptor of the active site. A BNR 1 repeat occupies 127 to 138 (VSSTDHGRTWSP). Substrate is bound by residues Y179 and Y181. One copy of the BNR 2 repeat lies at 197–208 (FISLDHGHTWKL). Residues E218, R237, and R303 each coordinate substrate. R303 is an active-site residue. The active-site Nucleophile is the Y333. E354 is an active-site residue.

The protein belongs to the glycosyl hydrolase 33 family. In terms of tissue distribution, highly expressed in heart.

It localises to the cytoplasm. Its subcellular location is the cytosol. The enzyme catalyses Hydrolysis of alpha-(2-&gt;3)-, alpha-(2-&gt;6)-, alpha-(2-&gt;8)- glycosidic linkages of terminal sialic acid residues in oligosaccharides, glycoproteins, glycolipids, colominic acid and synthetic substrates.. The catalysed reaction is a ganglioside GD1a + H2O = a ganglioside GM1 + N-acetylneuraminate. It catalyses the reaction a ganglioside GM1 + H2O = a ganglioside GA1 + N-acetylneuraminate. It carries out the reaction a ganglioside GT1b + H2O = a ganglioside GD1b + N-acetylneuraminate. The enzyme catalyses a ganglioside GD1b + H2O = a ganglioside GM1 + N-acetylneuraminate. The catalysed reaction is a ganglioside GD3 + H2O = a ganglioside GM3 + N-acetylneuraminate. It catalyses the reaction a ganglioside GM3 + H2O = a beta-D-galactosyl-(1-&gt;4)-beta-D-glucosyl-(1&lt;-&gt;1)-ceramide + N-acetylneuraminate. It carries out the reaction a ganglioside GM2 + H2O = a ganglioside GA2 + N-acetylneuraminate. The enzyme catalyses a neolactoside IV(3)-alpha-NeuAc-nLc4Cer(d18:1(4E)) + H2O = a neolactoside nLc4Cer(d18:1(4E)) + N-acetylneuraminate. The catalysed reaction is N-acetyl-alpha-neuraminosyl-(2-&gt;3)-beta-D-galactosyl-(1-&gt;4)-D-glucose + H2O = lactose + N-acetylneuraminate. Its function is as follows. Exo-alpha-sialidase that catalyzes the hydrolytic cleavage of the terminal sialic acid (N-acetylneuraminic acid, Neu5Ac) of a glycan moiety in the catabolism of glycolipids, glycoproteins and oligosacharides. Recognizes sialyl linkage positions of the glycan moiety as well as the supramolecular organization of the sialoglycoconjugate. Displays preference for alpha-(2-&gt;3)-sialylated GD1a and GT1B gangliosides over alpha-(2-&gt;8)-sialylated GD1b, in both monomeric forms and micelles. Hydrolyzes exclusively monomeric GM1 ganglioside, but has no activity toward the miscellar form. Has lower sialidase activity for glycoproteins such as fetuin and TF/transferrin that carry a mixture of alpha-(2-&gt;3) and alpha-(2-&gt;6)-sialyl linkages. Cleaves milk oligosaccharide alpha-(2-&gt;3)-sialyllactose, but is inactive toward isomer alpha-(2-&gt;6)-sialyllactose isomer. Has no activity toward colominic acid, a homomer of alpha-(2-&gt;8)-linked Neu5Ac residues. This chain is Sialidase-2 (Neu2), found in Mus musculus (Mouse).